Reading from the N-terminus, the 185-residue chain is Ribosome-recycling factor (185 aa).

Residues 136-159 (NEQLKSQQKDGKMSEDELKRSQDE) form a disordered region.

It belongs to the RRF family.

It localises to the cytoplasm. Its function is as follows. Responsible for the release of ribosomes from messenger RNA at the termination of protein biosynthesis. May increase the efficiency of translation by recycling ribosomes from one round of translation to another. The polypeptide is Ribosome-recycling factor (Pelotomaculum thermopropionicum (strain DSM 13744 / JCM 10971 / SI)).